The primary structure comprises 316 residues: Universal stress protein E (316 aa).

This sequence belongs to the universal stress protein A family.

The protein localises to the cytoplasm. Functionally, required for resistance to DNA-damaging agents. The protein is Universal stress protein E (uspE) of Escherichia coli O157:H7.